The following is a 211-amino-acid chain: Glycerol-3-phosphate acyltransferase (211 aa).

The next 5 membrane-spanning stretches (helical) occupy residues 5–25 (ALGMMLIAYLCGSVSSAILFC), 58–78 (VLVFDILKGMLPVWGAYALGV), 80–100 (PLYLGLTAIAACLGHIYPVFF), 112–132 (LGAIAPIGLDLTGLMTGTWLL), and 138–158 (GYSSLGAIVSALIAPFYVWWF).

This sequence belongs to the PlsY family. As to quaternary structure, probably interacts with PlsX.

It is found in the cell inner membrane. It catalyses the reaction an acyl phosphate + sn-glycerol 3-phosphate = a 1-acyl-sn-glycero-3-phosphate + phosphate. The protein operates within lipid metabolism; phospholipid metabolism. Its function is as follows. Catalyzes the transfer of an acyl group from acyl-phosphate (acyl-PO(4)) to glycerol-3-phosphate (G3P) to form lysophosphatidic acid (LPA). This enzyme utilizes acyl-phosphate as fatty acyl donor, but not acyl-CoA or acyl-ACP. The protein is Glycerol-3-phosphate acyltransferase of Pectobacterium atrosepticum (strain SCRI 1043 / ATCC BAA-672) (Erwinia carotovora subsp. atroseptica).